The following is a 226-amino-acid chain: N-(5'-phosphoribosyl)anthranilate isomerase (226 aa).

It belongs to the TrpF family.

The catalysed reaction is N-(5-phospho-beta-D-ribosyl)anthranilate = 1-(2-carboxyphenylamino)-1-deoxy-D-ribulose 5-phosphate. It functions in the pathway amino-acid biosynthesis; L-tryptophan biosynthesis; L-tryptophan from chorismate: step 3/5. The sequence is that of N-(5'-phosphoribosyl)anthranilate isomerase from Synechococcus sp. (strain JA-3-3Ab) (Cyanobacteria bacterium Yellowstone A-Prime).